A 282-amino-acid chain; its full sequence is D-alanine aminotransferase (282 aa).

Tyrosine 32 provides a ligand contact to substrate. Arginine 51 is a pyridoxal 5'-phosphate binding site. Positions 99 and 101 each coordinate substrate. Catalysis depends on lysine 146, which acts as the Proton acceptor. Lysine 146 carries the post-translational modification N6-(pyridoxal phosphate)lysine. Position 178 (glutamate 178) interacts with pyridoxal 5'-phosphate.

It belongs to the class-IV pyridoxal-phosphate-dependent aminotransferase family. As to quaternary structure, homodimer. Pyridoxal 5'-phosphate is required as a cofactor.

It catalyses the reaction D-alanine + 2-oxoglutarate = D-glutamate + pyruvate. In terms of biological role, acts on the D-isomers of alanine, leucine, aspartate, glutamate, aminobutyrate, norvaline and asparagine. The enzyme transfers an amino group from a substrate D-amino acid to the pyridoxal phosphate cofactor to form pyridoxamine and an alpha-keto acid in the first half-reaction. The second half-reaction is the reverse of the first, transferring the amino group from the pyridoxamine to a second alpha-keto acid to form the product D-amino acid via a ping-pong mechanism. This is an important process in the formation of D-alanine and D-glutamate, which are essential bacterial cell wall components. This is D-alanine aminotransferase (dat) from Staphylococcus aureus (strain N315).